The sequence spans 427 residues: Histidine--tRNA ligase (427 aa).

This sequence belongs to the class-II aminoacyl-tRNA synthetase family. Homodimer.

The protein localises to the cytoplasm. The catalysed reaction is tRNA(His) + L-histidine + ATP = L-histidyl-tRNA(His) + AMP + diphosphate + H(+). This Corynebacterium urealyticum (strain ATCC 43042 / DSM 7109) protein is Histidine--tRNA ligase.